Consider the following 598-residue polypeptide: IQ calmodulin-binding motif-containing protein 1 (598 aa).

An interaction with BBS1, BBS8 and BBS9 region spans residues 1–157 (MKPAGTDPRI…SLFWLLGGHV (157 aa)). The interval 287-598 (QEVEEQKLHK…MLFIGGTKPP (312 aa)) is interaction with CEP290, BBS1, BBS2, BBS4, BBS5, BBS7, BBS8 and BBS9. IQ domains are found at residues 294–317 (LHKA…LKKL), 318–338 (PSAV…MMLE), 387–416 (EEKS…SLTE), and 417–437 (YKAA…CRKK). Residues 336 to 362 (MLELNRQKEEEDLRLKLQLQRQRAMRL) adopt a coiled-coil conformation. An interaction with BBS1, BBS2, BBS4, BBS7, BBS8 and BBS9 region spans residues 530–598 (AEGKEPEQFL…MLFIGGTKPP (69 aa)).

Interacts with calmodulin. Interacts with CEP290/NPHP6; IQCB1/NPHP5 and CEP290/NPHP6; are proposed to form a functional NPHP5-6 module localized to the centrosome. Interacts with ATXN10. Interacts with NPHP1, INVS, NPHP4 and RPGRIP1L; these interactions likely require additional interactors. Associates with the BBSome complex; interacts with BBS1, BBS2, BBS4, BBS5, BBS7, BBS8 and BBS9. In terms of tissue distribution, localized to the outer segment and connecting cilia of photoreceptor cells.

It is found in the cytoplasm. The protein localises to the cytoskeleton. It localises to the microtubule organizing center. The protein resides in the centrosome. Involved in ciliogenesis. The function in an early step in cilia formation depends on its association with CEP290/NPHP6. Involved in regulation of the BBSome complex integrity, specifically for presence of BBS2 and BBS5 in the complex, and in ciliary targeting of selected BBSome cargos. May play a role in controlling entry of the BBSome complex to cilia possibly implicating CEP290/NPHP6. The polypeptide is IQ calmodulin-binding motif-containing protein 1 (Iqcb1) (Mus musculus (Mouse)).